A 407-amino-acid polypeptide reads, in one-letter code: uncharacterized protein (407 aa).

Residues 145–231 form a disordered region; that stretch reads EANRFGRSNS…DPLTSITSDT (87 aa). Positions 158 to 175 are enriched in basic residues; that stretch reads SNSRSKSSRSRSNNRSKS. A compositionally biased stretch (low complexity) spans 176 to 196; the sequence is SRSSSTQSKSNNRSNSRSNSK. An N-acetyltransferase domain is found at 271–407; sequence IVFETLDQND…NHKIHMEKDI (137 aa).

It localises to the virion. This is an uncharacterized protein from Acanthamoeba polyphaga (Amoeba).